Here is a 200-residue protein sequence, read N- to C-terminus: Blue fluorescence protein (200 aa).

2 Lumazine-binding repeats span residues 1–111 (MFKG…TGGR) and 112–200 (SLSG…AGNW).

Monomer.

The protein localises to the cytoplasm. Its function is as follows. Blue fluorescence protein (BFP) that can bind 6,7-dimethyl-8-ribityllumazine, riboflavin, and 6-methyl-7-oxo-8-ribityllumazine as a bound fluorophore. Has no riboflavin-synthase activity. The protein is Blue fluorescence protein of Aliivibrio fischeri (Vibrio fischeri).